A 1066-amino-acid chain; its full sequence is Beta-galactosidase (1066 aa).

Substrate-binding residues include N110 and D209. D209 provides a ligand contact to Na(+). E432, H434, and E477 together coordinate Mg(2+). Substrate-binding positions include E477 and 553 to 556 (EYAH). E477 (proton donor) is an active-site residue. E553 acts as the Nucleophile in catalysis. N613 is a binding site for Mg(2+). 2 residues coordinate Na(+): F617 and N620. Positions 620 and 1041 each coordinate substrate.

It belongs to the glycosyl hydrolase 2 family. As to quaternary structure, homotetramer. Requires Mg(2+) as cofactor. The cofactor is Na(+).

The enzyme catalyses Hydrolysis of terminal non-reducing beta-D-galactose residues in beta-D-galactosides.. This is Beta-galactosidase from Yersinia pseudotuberculosis serotype O:1b (strain IP 31758).